The primary structure comprises 180 residues: Inner membrane-spanning protein YciB (180 aa).

The next 5 membrane-spanning stretches (helical) occupy residues 25–45 (QNAT…CYII), 49–69 (VSKL…ITLI), 76–96 (IKIK…MSGI), 118–138 (ITLS…NEIV), and 150–170 (FKVF…LPLL).

The protein belongs to the YciB family.

The protein resides in the cell inner membrane. Its function is as follows. Plays a role in cell envelope biogenesis, maintenance of cell envelope integrity and membrane homeostasis. This is Inner membrane-spanning protein YciB from Rickettsia akari (strain Hartford).